The primary structure comprises 371 residues: MPHQQMLILFGLLPVATNISTWWNFGSMLLACSSMQVLTGFFLAVHYTANINLAFSSIVHITRDVPYGWMMQNLHAIGASMFFICIYIHIARGLYYGSYLNKKTWLSGTTLLIMLMATAFFGYVLPWGQMSFWAATVITNLLTAIPYLGTTMTTWLWGGFAINDPTLTRFFALHFILPFGIISLSSLHIMLLHEDGSSNPLGTNSDIDKIPFHPYHTYKDLLMLSLMVLMLLMTVSFLPDIFNDPENFSKANPLVTPQHIKPEWYFLFAYGILRSILNKLGGALALAMSIMILLTIPFTHTSNIRSMMFRPIMQLMFWTLVATFMVITWAATKPVEPPFTMISQIASTINFLFLIMNPIAGWIENNIMKYN.

Helical transmembrane passes span Phe25 to Val45, Trp69 to Ile90, Trp105 to Leu125, and Phe170 to Met190. Heme b contacts are provided by His75 and His89. His174 and His188 together coordinate heme b. Residue His193 participates in a ubiquinone binding. Transmembrane regions (helical) follow at residues Tyr218–Leu238, Leu280–His300, Ile312–Thr332, and Phe339–Pro358.

This sequence belongs to the cytochrome b family. As to quaternary structure, the cytochrome bc1 complex contains 3 respiratory subunits (MT-CYB, CYC1 and UQCRFS1), 2 core proteins (UQCRC1 and UQCRC2) and probably 6 low-molecular weight proteins. Requires heme b as cofactor.

The protein localises to the mitochondrion inner membrane. Component of the ubiquinol-cytochrome c reductase complex (complex III or cytochrome b-c1 complex) that is part of the mitochondrial respiratory chain. The b-c1 complex mediates electron transfer from ubiquinol to cytochrome c. Contributes to the generation of a proton gradient across the mitochondrial membrane that is then used for ATP synthesis. In Eryx miliaris (Desert sand boa), this protein is Cytochrome b (MT-CYB).